The sequence spans 118 residues: Acidic phospholipase A2 homolog (118 aa).

Intrachain disulfides connect Cys-11–Cys-70, Cys-25–Cys-117, Cys-27–Cys-43, Cys-42–Cys-98, Cys-49–Cys-91, Cys-59–Cys-84, and Cys-77–Cys-89.

Belongs to the phospholipase A2 family. Group I subfamily. A49 sub-subfamily. In terms of tissue distribution, expressed by the venom gland.

Its subcellular location is the secreted. In terms of biological role, snake venom phospholipase A2 (PLA2) homolog that lacks both catalytic and neurotoxicity activities. The protein is Acidic phospholipase A2 homolog of Bungarus fasciatus (Banded krait).